Reading from the N-terminus, the 292-residue chain is Phosphatidylserine decarboxylase proenzyme (292 aa).

Catalysis depends on charge relay system; for autoendoproteolytic cleavage activity residues D98, H153, and S254. Residue S254 is the Schiff-base intermediate with substrate; via pyruvic acid; for decarboxylase activity of the active site. At S254 the chain carries Pyruvic acid (Ser); by autocatalysis.

Belongs to the phosphatidylserine decarboxylase family. PSD-B subfamily. Prokaryotic type I sub-subfamily. In terms of assembly, heterodimer of a large membrane-associated beta subunit and a small pyruvoyl-containing alpha subunit. Requires pyruvate as cofactor. Post-translationally, is synthesized initially as an inactive proenzyme. Formation of the active enzyme involves a self-maturation process in which the active site pyruvoyl group is generated from an internal serine residue via an autocatalytic post-translational modification. Two non-identical subunits are generated from the proenzyme in this reaction, and the pyruvate is formed at the N-terminus of the alpha chain, which is derived from the carboxyl end of the proenzyme. The autoendoproteolytic cleavage occurs by a canonical serine protease mechanism, in which the side chain hydroxyl group of the serine supplies its oxygen atom to form the C-terminus of the beta chain, while the remainder of the serine residue undergoes an oxidative deamination to produce ammonia and the pyruvoyl prosthetic group on the alpha chain. During this reaction, the Ser that is part of the protease active site of the proenzyme becomes the pyruvoyl prosthetic group, which constitutes an essential element of the active site of the mature decarboxylase.

The protein resides in the cell membrane. The catalysed reaction is a 1,2-diacyl-sn-glycero-3-phospho-L-serine + H(+) = a 1,2-diacyl-sn-glycero-3-phosphoethanolamine + CO2. It functions in the pathway phospholipid metabolism; phosphatidylethanolamine biosynthesis; phosphatidylethanolamine from CDP-diacylglycerol: step 2/2. Catalyzes the formation of phosphatidylethanolamine (PtdEtn) from phosphatidylserine (PtdSer). The sequence is that of Phosphatidylserine decarboxylase proenzyme from Halorhodospira halophila (strain DSM 244 / SL1) (Ectothiorhodospira halophila (strain DSM 244 / SL1)).